Here is a 169-residue protein sequence, read N- to C-terminus: Large ribosomal subunit protein uL5 (169 aa).

The protein belongs to the universal ribosomal protein uL5 family. Part of the 50S ribosomal subunit; contacts the 5S rRNA and probably tRNA. Forms a bridge to the 30S subunit in the 70S ribosome.

This is one of the proteins that bind and probably mediate the attachment of the 5S RNA into the large ribosomal subunit, where it forms part of the central protuberance. In the 70S ribosome it contacts protein S13 of the 30S subunit (bridge B1b), connecting the 2 subunits; this bridge is implicated in subunit movement. May contact the P site tRNA; the 5S rRNA and some of its associated proteins might help stabilize positioning of ribosome-bound tRNAs. The sequence is that of Large ribosomal subunit protein uL5 from Cenarchaeum symbiosum (strain A).